The primary structure comprises 370 residues: ATP/GTP phosphatase (370 aa).

It carries out the reaction ATP + H2O = ADP + phosphate + H(+). The catalysed reaction is GTP + H2O = GDP + phosphate + H(+). Functionally, has nucleotide phosphatase activity toward ATP and GTP, but not toward CTP, TTP and ADP. The protein is ATP/GTP phosphatase of Helicobacter pylori (strain ATCC 700392 / 26695) (Campylobacter pylori).